A 192-amino-acid polypeptide reads, in one-letter code: Elongation factor P (192 aa).

The protein belongs to the elongation factor P family.

It localises to the cytoplasm. It functions in the pathway protein biosynthesis; polypeptide chain elongation. Its function is as follows. Involved in peptide bond synthesis. Stimulates efficient translation and peptide-bond synthesis on native or reconstituted 70S ribosomes in vitro. Probably functions indirectly by altering the affinity of the ribosome for aminoacyl-tRNA, thus increasing their reactivity as acceptors for peptidyl transferase. In Borrelia hermsii (strain HS1 / DAH), this protein is Elongation factor P.